A 129-amino-acid polypeptide reads, in one-letter code: Fluoride-specific ion channel FluC (129 aa).

4 helical membrane passes run 8-28 (ILLVGVGGFLGSVARYLVALW), 34-54 (AVFPFATLTVNLLGSFLIGFI), 70-90 (IFLVTGFCGGFTTFSSYMIEH), and 102-122 (AALYLFGSLIGGFIALYLGII). The Na(+) site is built by Gly-78 and Thr-81.

The protein belongs to the fluoride channel Fluc/FEX (TC 1.A.43) family.

It is found in the cell inner membrane. It catalyses the reaction fluoride(in) = fluoride(out). Its activity is regulated as follows. Na(+) is not transported, but it plays an essential structural role and its presence is essential for fluoride channel function. In terms of biological role, fluoride-specific ion channel. Important for reducing fluoride concentration in the cell, thus reducing its toxicity. The chain is Fluoride-specific ion channel FluC from Chlorobium chlorochromatii (strain CaD3).